Here is a 405-residue protein sequence, read N- to C-terminus: L-rhamnonate dehydratase (405 aa).

Residues His33 and Arg59 each contribute to the substrate site. Mg(2+) is bound by residues Asp226, Glu252, and Glu280. The Proton acceptor role is filled by His329. Glu349 provides a ligand contact to substrate.

Belongs to the mandelate racemase/muconate lactonizing enzyme family. RhamD subfamily. In terms of assembly, homooctamer; tetramer of dimers. Mg(2+) serves as cofactor.

The enzyme catalyses L-rhamnonate = 2-dehydro-3-deoxy-L-rhamnonate + H2O. In terms of biological role, catalyzes the dehydration of L-rhamnonate to 2-keto-3-deoxy-L-rhamnonate (KDR). In Escherichia coli O6:H1 (strain CFT073 / ATCC 700928 / UPEC), this protein is L-rhamnonate dehydratase.